An 80-amino-acid polypeptide reads, in one-letter code: Probable antimicrobial peptide clone Con10 (80 aa).

Positions 1–24 (MQYKTKTFLVIFLAYLVVTNEAEA) are cleaved as a signal peptide. Residues 56–80 (EIEDFFDPYQRELDLELERLLSQLQ) constitute a propeptide that is removed on maturation.

Belongs to the non-disulfide-bridged peptide (NDBP) superfamily. Medium-length antimicrobial peptide (group 3) family. As to expression, expressed by the venom gland.

The protein resides in the secreted. The protein localises to the target cell membrane. In terms of biological role, antimicrobial peptide. Has antifungal activity against all strains tested (MIC=12.5-200 uM). May act by disrupting the integrity of the bacterial cell membrane. This is Probable antimicrobial peptide clone Con10 from Opisthacanthus cayaporum (South American scorpion).